A 643-amino-acid chain; its full sequence is Long-chain fatty acid transport protein 4 (643 aa).

2 helical membrane-spanning segments follow: residues 20 to 42 (LPWTQVGFSLLFLYLGSGGWRFI) and 139 to 156 (FVGLWLGMAKLGVEAALI). 243–254 (YIYTSGTTGLPK) lines the AMP pocket.

It belongs to the ATP-dependent AMP-binding enzyme family. In terms of tissue distribution, expressed at highest levels in brain, testis, colon and kidney. Expressed at medium levels in heart and liver, small intestine and stomach. Expressed at low levels in peripheral leukocytes, bone marrow, skeletal muscle and aorta. Expressed in adipose tissue. Expressed in brain gray matter.

The protein resides in the endoplasmic reticulum membrane. The catalysed reaction is a fatty acid(in) = a fatty acid(out). It catalyses the reaction (9Z,12Z)-octadecadienoate(out) = (9Z,12Z)-octadecadienoate(in). The enzyme catalyses (9Z)-octadecenoate(out) = (9Z)-octadecenoate(in). It carries out the reaction hexadecanoate(out) = hexadecanoate(in). The catalysed reaction is a long-chain fatty acid + ATP + CoA = a long-chain fatty acyl-CoA + AMP + diphosphate. It catalyses the reaction hexadecanoate + ATP + CoA = hexadecanoyl-CoA + AMP + diphosphate. The enzyme catalyses (E)-hexadec-2-enoate + ATP + CoA = (2E)-hexadecenoyl-CoA + AMP + diphosphate. It carries out the reaction (9Z)-octadecenoate + ATP + CoA = (9Z)-octadecenoyl-CoA + AMP + diphosphate. The catalysed reaction is (5Z,8Z,11Z,14Z)-eicosatetraenoate + ATP + CoA = (5Z,8Z,11Z,14Z)-eicosatetraenoyl-CoA + AMP + diphosphate. It catalyses the reaction a very long-chain fatty acid + ATP + CoA = a very long-chain fatty acyl-CoA + AMP + diphosphate. The enzyme catalyses tetracosanoate + ATP + CoA = tetracosanoyl-CoA + AMP + diphosphate. Its function is as follows. Mediates the levels of long-chain fatty acids (LCFA) in the cell by facilitating their transport across cell membranes. Appears to be the principal fatty acid transporter in small intestinal enterocytes. Also functions as an acyl-CoA ligase catalyzing the ATP-dependent formation of fatty acyl-CoA using LCFA and very-long-chain fatty acids (VLCFA) as substrates, which prevents fatty acid efflux from cells and might drive more fatty acid uptake. Plays a role in the formation of the epidermal barrier. Required for fat absorption in early embryogenesis. Probably involved in fatty acid transport across the blood barrier. Indirectly inhibits RPE65 via substrate competition and via production of VLCFA derivatives like lignoceroyl-CoA. Prevents light-induced degeneration of rods and cones. In Homo sapiens (Human), this protein is Long-chain fatty acid transport protein 4.